Here is a 153-residue protein sequence, read N- to C-terminus: Glucose-6-phosphate 1-dehydrogenase (153 aa).

NADP(+) is bound by residues Arg-21 and Lys-120. Lys-120 serves as a coordination point for D-glucose 6-phosphate.

The protein belongs to the glucose-6-phosphate dehydrogenase family.

It is found in the cytoplasm. The protein localises to the cytosol. The catalysed reaction is D-glucose 6-phosphate + NADP(+) = 6-phospho-D-glucono-1,5-lactone + NADPH + H(+). It functions in the pathway carbohydrate degradation; pentose phosphate pathway; D-ribulose 5-phosphate from D-glucose 6-phosphate (oxidative stage): step 1/3. In terms of biological role, cytosolic glucose-6-phosphate dehydrogenase that catalyzes the first and rate-limiting step of the oxidative branch within the pentose phosphate pathway/shunt, an alternative route to glycolysis for the dissimilation of carbohydrates and a major source of reducing power and metabolic intermediates for fatty acid and nucleic acid biosynthetic processes. This is Glucose-6-phosphate 1-dehydrogenase (Zw) from Drosophila simulans (Fruit fly).